Reading from the N-terminus, the 313-residue chain is uncharacterized protein (313 aa).

Disordered regions lie at residues E24–N53 and T190–R291. A compositionally biased stretch (polar residues) spans T211–S229. Residues S239–S260 show a composition bias toward low complexity. Residues D261–D284 are compositionally biased toward polar residues.

This is an uncharacterized protein from Saccharomyces cerevisiae (strain ATCC 204508 / S288c) (Baker's yeast).